The following is an 82-amino-acid chain: ATP synthase subunit c, chloroplastic (82 aa).

A run of 2 helical transmembrane segments spans residues 3–23 (PLIC…GAIG) and 57–77 (LAFM…LMFA).

It belongs to the ATPase C chain family. In terms of assembly, F-type ATPases have 2 components, F(1) - the catalytic core - and F(0) - the membrane proton channel. F(1) has five subunits: alpha(3), beta(3), gamma(1), delta(1), epsilon(1). F(0) has four main subunits: a(1), b(1), b'(1) and c(10-14). The alpha and beta chains form an alternating ring which encloses part of the gamma chain. F(1) is attached to F(0) by a central stalk formed by the gamma and epsilon chains, while a peripheral stalk is formed by the delta, b and b' chains.

The protein localises to the plastid. The protein resides in the chloroplast thylakoid membrane. Its function is as follows. F(1)F(0) ATP synthase produces ATP from ADP in the presence of a proton or sodium gradient. F-type ATPases consist of two structural domains, F(1) containing the extramembraneous catalytic core and F(0) containing the membrane proton channel, linked together by a central stalk and a peripheral stalk. During catalysis, ATP synthesis in the catalytic domain of F(1) is coupled via a rotary mechanism of the central stalk subunits to proton translocation. Key component of the F(0) channel; it plays a direct role in translocation across the membrane. A homomeric c-ring of between 10-14 subunits forms the central stalk rotor element with the F(1) delta and epsilon subunits. The polypeptide is ATP synthase subunit c, chloroplastic (Ostreococcus tauri).